The following is a 277-amino-acid chain: Large ribosomal subunit protein uL2 (277 aa).

A disordered region spans residues 199–277; that stretch reads DHGNINDGKA…ILRSRHQRKS (79 aa).

Belongs to the universal ribosomal protein uL2 family. Part of the 50S ribosomal subunit. Forms a bridge to the 30S subunit in the 70S ribosome.

In terms of biological role, one of the primary rRNA binding proteins. Required for association of the 30S and 50S subunits to form the 70S ribosome, for tRNA binding and peptide bond formation. It has been suggested to have peptidyltransferase activity; this is somewhat controversial. Makes several contacts with the 16S rRNA in the 70S ribosome. This chain is Large ribosomal subunit protein uL2, found in Mesorhizobium japonicum (strain LMG 29417 / CECT 9101 / MAFF 303099) (Mesorhizobium loti (strain MAFF 303099)).